Reading from the N-terminus, the 343-residue chain is Phenylalanine--tRNA ligase alpha subunit (343 aa).

Glu-264 provides a ligand contact to Mg(2+).

Belongs to the class-II aminoacyl-tRNA synthetase family. Phe-tRNA synthetase alpha subunit type 1 subfamily. Tetramer of two alpha and two beta subunits. The cofactor is Mg(2+).

It is found in the cytoplasm. The enzyme catalyses tRNA(Phe) + L-phenylalanine + ATP = L-phenylalanyl-tRNA(Phe) + AMP + diphosphate + H(+). In Azoarcus sp. (strain BH72), this protein is Phenylalanine--tRNA ligase alpha subunit.